Consider the following 450-residue polypeptide: tRNA-2-methylthio-N(6)-dimethylallyladenosine synthase (450 aa).

In terms of domain architecture, MTTase N-terminal spans 3–118; that stretch reads KKVFIKTFGC…LPELLQQRER (116 aa). [4Fe-4S] cluster contacts are provided by cysteine 12, cysteine 49, cysteine 81, cysteine 155, cysteine 159, and cysteine 162. The Radical SAM core domain maps to 141-376; that stretch reads SVQGASAFVS…VIDTHIRSIS (236 aa). Residues 377 to 440 form the TRAM domain; sequence ASRVGTVQRI…AYTLRGQYCA (64 aa).

This sequence belongs to the methylthiotransferase family. MiaB subfamily. In terms of assembly, monomer. It depends on [4Fe-4S] cluster as a cofactor.

It is found in the cytoplasm. It catalyses the reaction N(6)-dimethylallyladenosine(37) in tRNA + (sulfur carrier)-SH + AH2 + 2 S-adenosyl-L-methionine = 2-methylsulfanyl-N(6)-dimethylallyladenosine(37) in tRNA + (sulfur carrier)-H + 5'-deoxyadenosine + L-methionine + A + S-adenosyl-L-homocysteine + 2 H(+). Its function is as follows. Catalyzes the methylthiolation of N6-(dimethylallyl)adenosine (i(6)A), leading to the formation of 2-methylthio-N6-(dimethylallyl)adenosine (ms(2)i(6)A) at position 37 in tRNAs that read codons beginning with uridine. This Verminephrobacter eiseniae (strain EF01-2) protein is tRNA-2-methylthio-N(6)-dimethylallyladenosine synthase.